Reading from the N-terminus, the 1363-residue chain is DNA-directed RNA polymerase subunit beta (1363 aa).

Belongs to the RNA polymerase beta chain family. The RNAP catalytic core consists of 2 alpha, 1 beta, 1 beta' and 1 omega subunit. When a sigma factor is associated with the core the holoenzyme is formed, which can initiate transcription.

It catalyses the reaction RNA(n) + a ribonucleoside 5'-triphosphate = RNA(n+1) + diphosphate. Its function is as follows. DNA-dependent RNA polymerase catalyzes the transcription of DNA into RNA using the four ribonucleoside triphosphates as substrates. In Syntrophus aciditrophicus (strain SB), this protein is DNA-directed RNA polymerase subunit beta.